Consider the following 592-residue polypeptide: Threonine--tRNA ligase (592 aa).

A catalytic region spans residues 193–488; it reads DHRKLGPALG…LIEHYGGAFP (296 aa). Zn(2+) is bound by residues Cys-284, His-335, and His-465.

This sequence belongs to the class-II aminoacyl-tRNA synthetase family. Homodimer. Requires Zn(2+) as cofactor.

The protein localises to the cytoplasm. The enzyme catalyses tRNA(Thr) + L-threonine + ATP = L-threonyl-tRNA(Thr) + AMP + diphosphate + H(+). In terms of biological role, catalyzes the attachment of threonine to tRNA(Thr) in a two-step reaction: L-threonine is first activated by ATP to form Thr-AMP and then transferred to the acceptor end of tRNA(Thr). Also edits incorrectly charged L-seryl-tRNA(Thr). This chain is Threonine--tRNA ligase, found in Treponema pallidum (strain Nichols).